The following is a 341-amino-acid chain: tRNA N6-adenosine threonylcarbamoyltransferase (341 aa).

Fe cation contacts are provided by H111 and H115. Substrate is bound by residues 134 to 138 (LVSGG), D167, G180, and N276. D304 contacts Fe cation.

It belongs to the KAE1 / TsaD family. Requires Fe(2+) as cofactor.

It is found in the cytoplasm. It carries out the reaction L-threonylcarbamoyladenylate + adenosine(37) in tRNA = N(6)-L-threonylcarbamoyladenosine(37) in tRNA + AMP + H(+). Functionally, required for the formation of a threonylcarbamoyl group on adenosine at position 37 (t(6)A37) in tRNAs that read codons beginning with adenine. Is involved in the transfer of the threonylcarbamoyl moiety of threonylcarbamoyl-AMP (TC-AMP) to the N6 group of A37, together with TsaE and TsaB. TsaD likely plays a direct catalytic role in this reaction. The polypeptide is tRNA N6-adenosine threonylcarbamoyltransferase (Azotobacter vinelandii (strain DJ / ATCC BAA-1303)).